The following is an 80-amino-acid chain: Gamma-conotoxin PnVIIA (80 aa).

The signal sequence occupies residues 1–19; sequence MEKLTILLLVAAVLMSTQA. Positions 20-43 are excised as a propeptide; it reads QNQEQRQQAKINFLSKRKPSAERW. 3 cysteine pairs are disulfide-bonded: Cys47-Cys61, Cys54-Cys65, and Cys60-Cys70. At Glu59 the chain carries 4-carboxyglutamate. Position 71 is a 4-carboxyglutamate (Glu71). Pro76 is modified (4-hydroxyproline). A propeptide spanning residues 78–80 is cleaved from the precursor; it reads FGA.

Expressed by the venom duct.

The protein resides in the secreted. Gamma-conotoxins may act on voltage-gated non-specific cation pacemaker channels (HCN). Triggers depolarization and firing of action potential bursts in the caudodorsal neurons of lymnaea. This effect is due to activation or enhancement of a slow inward cation current that may underlie endogenous bursting activity of these neurons. The polypeptide is Gamma-conotoxin PnVIIA (Conus pennaceus (Feathered cone)).